A 477-amino-acid polypeptide reads, in one-letter code: Glycogen synthase (477 aa).

Lys15 contributes to the ADP-alpha-D-glucose binding site.

Belongs to the glycosyltransferase 1 family. Bacterial/plant glycogen synthase subfamily.

It carries out the reaction [(1-&gt;4)-alpha-D-glucosyl](n) + ADP-alpha-D-glucose = [(1-&gt;4)-alpha-D-glucosyl](n+1) + ADP + H(+). The protein operates within glycan biosynthesis; glycogen biosynthesis. Synthesizes alpha-1,4-glucan chains using ADP-glucose. This Shigella boydii serotype 4 (strain Sb227) protein is Glycogen synthase.